Consider the following 638-residue polypeptide: Golgin subfamily A member 8S (638 aa).

Residues 1 to 11 (MWPQARLPPHP) show a composition bias toward pro residues. Residues 1–84 (MWPQARLPPH…GESPTSSATL (84 aa)) form a disordered region. The span at 50-62 (TNGSIHETATSGG) shows a compositional bias: polar residues. Coiled-coil stretches lie at residues 105-160 (VSQL…LNTD), 223-275 (LEQS…MSQE), and 318-417 (EAEL…QQKQ). Disordered stretches follow at residues 427–453 (ALPG…PSIP), 510–532 (KDAA…DEAA), and 556–575 (AHNP…ELGA). Over residues 434–446 (GGGHLDSEGEEAP) the composition is skewed to basic and acidic residues. A compositionally biased stretch (gly residues) spans 514 to 525 (LGGGHHQAGAQG). Positions 561-574 (DEPGPGAPAPQELG) are enriched in low complexity.

This sequence belongs to the GOLGA8 family.

The polypeptide is Golgin subfamily A member 8S (Homo sapiens (Human)).